Here is a 250-residue protein sequence, read N- to C-terminus: Aquaporin TIP2-2 (250 aa).

The next 2 membrane-spanning stretches (helical) occupy residues 22 to 42 and 54 to 74; these read VAEFIATLLFVFAGVGSAIAF and AGLVAIAVAHALALFVGVSVA. The NPA 1 signature appears at 83 to 85; the sequence is NPA. 3 consecutive transmembrane segments (helical) span residues 97–119, 142–162, and 169–189; these read TVLTGLFYWVAQLLGASVACLLL, GVVFEIVITFALVYTVYATAA, and LGTIAPIAIGFIVGANILAAG. The short motif at 197 to 199 is the NPA 2 element; the sequence is NPA. The helical transmembrane segment at 218-238 threads the bilayer; sequence WVGPLIGGGLAGLVYGDVFIG.

This sequence belongs to the MIP/aquaporin (TC 1.A.8) family. TIP (TC 1.A.8.10) subfamily.

It is found in the vacuole membrane. Aquaporins facilitate the transport of water and small neutral solutes across cell membranes. In Zea mays (Maize), this protein is Aquaporin TIP2-2 (TIP2-2).